Consider the following 249-residue polypeptide: Deoxyribose-phosphate aldolase (249 aa).

Catalysis depends on Asp94, which acts as the Proton donor/acceptor. Lys158 acts as the Schiff-base intermediate with acetaldehyde in catalysis. The active-site Proton donor/acceptor is Lys200.

Belongs to the DeoC/FbaB aldolase family. DeoC type 1 subfamily.

The protein resides in the cytoplasm. It catalyses the reaction 2-deoxy-D-ribose 5-phosphate = D-glyceraldehyde 3-phosphate + acetaldehyde. It participates in carbohydrate degradation; 2-deoxy-D-ribose 1-phosphate degradation; D-glyceraldehyde 3-phosphate and acetaldehyde from 2-deoxy-alpha-D-ribose 1-phosphate: step 2/2. Catalyzes a reversible aldol reaction between acetaldehyde and D-glyceraldehyde 3-phosphate to generate 2-deoxy-D-ribose 5-phosphate. This chain is Deoxyribose-phosphate aldolase, found in Thermoplasma volcanium (strain ATCC 51530 / DSM 4299 / JCM 9571 / NBRC 15438 / GSS1).